A 263-amino-acid chain; its full sequence is Putative ankyrin repeat domain-containing protein 20A12 pseudogene (263 aa).

2 coiled-coil regions span residues 65–121 and 171–263; these read KKDL…MLES and NQVF…IQLH.

The sequence is that of Putative ankyrin repeat domain-containing protein 20A12 pseudogene from Homo sapiens (Human).